A 219-amino-acid chain; its full sequence is 7-cyano-7-deazaguanine synthase (219 aa).

10 to 20 (FSGGQDSTTCL) lines the ATP pocket. Cysteine 188, cysteine 196, cysteine 199, and cysteine 202 together coordinate Zn(2+).

It belongs to the QueC family. Zn(2+) serves as cofactor.

It carries out the reaction 7-carboxy-7-deazaguanine + NH4(+) + ATP = 7-cyano-7-deazaguanine + ADP + phosphate + H2O + H(+). It functions in the pathway purine metabolism; 7-cyano-7-deazaguanine biosynthesis. Functionally, catalyzes the ATP-dependent conversion of 7-carboxy-7-deazaguanine (CDG) to 7-cyano-7-deazaguanine (preQ(0)). This chain is 7-cyano-7-deazaguanine synthase, found in Neisseria meningitidis serogroup C / serotype 2a (strain ATCC 700532 / DSM 15464 / FAM18).